Consider the following 333-residue polypeptide: Beta-ketoacyl-[acyl-carrier-protein] synthase III (333 aa).

Catalysis depends on residues C112 and H255. Residues 256 to 260 (QANQR) form an ACP-binding region. The active site involves N285.

This sequence belongs to the thiolase-like superfamily. FabH family. In terms of assembly, homodimer.

The protein localises to the cytoplasm. It catalyses the reaction malonyl-[ACP] + acetyl-CoA + H(+) = 3-oxobutanoyl-[ACP] + CO2 + CoA. It functions in the pathway lipid metabolism; fatty acid biosynthesis. Catalyzes the condensation reaction of fatty acid synthesis by the addition to an acyl acceptor of two carbons from malonyl-ACP. Catalyzes the first condensation reaction which initiates fatty acid synthesis and may therefore play a role in governing the total rate of fatty acid production. Possesses both acetoacetyl-ACP synthase and acetyl transacylase activities. Its substrate specificity determines the biosynthesis of branched-chain and/or straight-chain of fatty acids. This is Beta-ketoacyl-[acyl-carrier-protein] synthase III from Synechococcus sp. (strain RCC307).